Here is a 192-residue protein sequence, read N- to C-terminus: Pyridoxine/pyridoxamine 5'-phosphate oxidase (192 aa).

FMN contacts are provided by residues 41 to 46 (RMMLLK), 56 to 57 (FT), arginine 62, lysine 63, and glutamine 85. Substrate is bound at residue lysine 46. Substrate is bound by residues tyrosine 103, arginine 107, and serine 111. FMN contacts are provided by residues 120–121 (QS) and tryptophan 165. 171 to 173 (RLH) serves as a coordination point for substrate. Residue arginine 175 participates in FMN binding.

It belongs to the pyridoxamine 5'-phosphate oxidase family. In terms of assembly, homodimer. The cofactor is FMN.

The catalysed reaction is pyridoxamine 5'-phosphate + O2 + H2O = pyridoxal 5'-phosphate + H2O2 + NH4(+). It carries out the reaction pyridoxine 5'-phosphate + O2 = pyridoxal 5'-phosphate + H2O2. It participates in cofactor metabolism; pyridoxal 5'-phosphate salvage; pyridoxal 5'-phosphate from pyridoxamine 5'-phosphate: step 1/1. It functions in the pathway cofactor metabolism; pyridoxal 5'-phosphate salvage; pyridoxal 5'-phosphate from pyridoxine 5'-phosphate: step 1/1. Catalyzes the oxidation of either pyridoxine 5'-phosphate (PNP) or pyridoxamine 5'-phosphate (PMP) into pyridoxal 5'-phosphate (PLP). The protein is Pyridoxine/pyridoxamine 5'-phosphate oxidase of Zymomonas mobilis subsp. mobilis (strain ATCC 31821 / ZM4 / CP4).